The sequence spans 238 residues: Cysteine-rich venom protein pseudechetoxin-like (238 aa).

Positions 1–19 are cleaved as a signal peptide; that stretch reads MIAFLVLLSLAAVLQQSSG. Residues 20-28 constitute a propeptide that is removed on maturation; the sequence is TVDFASESS. In terms of domain architecture, SCP spans 38 to 164; it reads VDKHNDLRRS…STKYLYVCQY (127 aa). 8 disulfide bridges follow: Cys75–Cys153, Cys92–Cys165, Cys148–Cys162, Cys184–Cys191, Cys187–Cys196, Cys200–Cys233, Cys209–Cys227, and Cys218–Cys231. The 34-residue stretch at 200 to 233 folds into the ShKT domain; it reads CKHNDDLSNCKTLVKKHKCQTEWIKSKCPATCFC.

The protein belongs to the CRISP family. As to expression, expressed by the venom gland.

It localises to the secreted. Its function is as follows. Blocks olfactory (CNGA2) and retinal (CNGA1) CNG channel currents. Does not affect neither depolarization- nor caffeine-induced contraction of smooth muscle. The polypeptide is Cysteine-rich venom protein pseudechetoxin-like (Pseudonaja textilis (Eastern brown snake)).